The following is a 206-amino-acid chain: Small ribosomal subunit protein uS7 (206 aa).

Acidic residues predominate over residues 1–19; the sequence is MSAEDTPEADADAAEESEP. Residues 1–25 are disordered; that stretch reads MSAEDTPEADADAAEESEPETARAK. Position 2 is an N-acetylserine (Ser2).

The protein belongs to the universal ribosomal protein uS7 family. In terms of assembly, part of the 30S ribosomal subunit.

Functionally, one of the primary rRNA binding proteins, it binds directly to 16S rRNA where it nucleates assembly of the head domain of the 30S subunit. Is located at the subunit interface close to the decoding center. This Haloarcula marismortui (strain ATCC 43049 / DSM 3752 / JCM 8966 / VKM B-1809) (Halobacterium marismortui) protein is Small ribosomal subunit protein uS7.